Here is a 104-residue protein sequence, read N- to C-terminus: Large ribosomal subunit protein uL23 (104 aa).

The protein belongs to the universal ribosomal protein uL23 family. Part of the 50S ribosomal subunit. Contacts protein L29, and trigger factor when it is bound to the ribosome.

One of the early assembly proteins it binds 23S rRNA. One of the proteins that surrounds the polypeptide exit tunnel on the outside of the ribosome. Forms the main docking site for trigger factor binding to the ribosome. The polypeptide is Large ribosomal subunit protein uL23 (Paraburkholderia phymatum (strain DSM 17167 / CIP 108236 / LMG 21445 / STM815) (Burkholderia phymatum)).